Reading from the N-terminus, the 122-residue chain is Serum amyloid A-1 protein (122 aa).

Residues 1-18 form the signal peptide; it reads MKLLTGLVFCSLVLGVSS. The tract at residues 19 to 45 is important for amyloid formation; forms amyloid fibrils in vitro; the sequence is RSFFSFLGEAFDGARDMWRAYSDMREA. The propeptide at 95 to 122 is often cleaved during amyloidogenesis; the sequence is LADQAANEWGRSGKDPNHFRPAGLPEKY. The tract at residues 98 to 122 is disordered; the sequence is QAANEWGRSGKDPNHFRPAGLPEKY. At N101 the chain carries N4,N4-dimethylasparagine.

This sequence belongs to the SAA family. As to quaternary structure, homohexamer; dimer of trimers. Can form amyloid fibrils after partial proteolysis; the native, undenatured protein does not form amyloid fibrils (in vitro). Apolipoprotein of the HDL complex. Binds to heparin. Post-translationally, this protein is the precursor of amyloid protein A, which is formed by the removal of approximately 24 residues from the C-terminal end. Expressed by the liver; secreted in plasma (at protein level).

It localises to the secreted. Major acute phase protein. The protein is Serum amyloid A-1 protein (SAA1) of Homo sapiens (Human).